We begin with the raw amino-acid sequence, 907 residues long: Leucine--tRNA ligase (907 aa).

Positions 42–52 match the 'HIGH' region motif; that stretch reads PYPSGKLHMGH. The 'KMSKS' region signature appears at 651–655; sequence TMSKS. Residue K654 coordinates ATP.

This sequence belongs to the class-I aminoacyl-tRNA synthetase family.

The protein localises to the cytoplasm. It catalyses the reaction tRNA(Leu) + L-leucine + ATP = L-leucyl-tRNA(Leu) + AMP + diphosphate. The polypeptide is Leucine--tRNA ligase (Verminephrobacter eiseniae (strain EF01-2)).